A 395-amino-acid polypeptide reads, in one-letter code: Beta-1,4-galactosyltransferase 3 (395 aa).

Residues 1 to 10 (MLRRLLERPC) are Cytoplasmic-facing. A helical; Signal-anchor for type II membrane protein transmembrane segment spans residues 11–31 (TLALLVGSQLAVMMYLSLGGF). Residues 32–395 (RSLSALFGRD…ANHTAPHGSH (364 aa)) lie on the Lumenal side of the membrane. The N-linked (GlcNAc...) asparagine glycan is linked to Asn-57. Cysteines 79 and 121 form a disulfide. Residues 132 to 136 (PHRAR), 171 to 173 (FNR), 198 to 199 (VD), Tyr-228, and Trp-260 contribute to the UDP-alpha-D-galactose site. Residues Cys-192 and Cys-211 are joined by a disulfide bond. Mn(2+) is bound at residue Asp-199. 262–265 (GEDD) contributes to the N-acetyl-D-glucosamine binding site. Mn(2+) is bound at residue His-293. 293-295 (HRG) contributes to the UDP-alpha-D-galactose binding site. N-acetyl-D-glucosamine is bound at residue Arg-305. 2 N-linked (GlcNAc...) asparagine glycosylation sites follow: Asn-339 and Asn-387. The disordered stretch occupies residues 341–395 (TADIGTDPRGPRAPSGPRYPPGSSQAFRQEMLQRRPPARPGPLPTANHTAPHGSH).

Belongs to the glycosyltransferase 7 family. Mn(2+) is required as a cofactor.

Its subcellular location is the golgi apparatus. It is found in the golgi stack membrane. The catalysed reaction is an N-acetyl-beta-D-glucosaminyl derivative + UDP-alpha-D-galactose = a beta-D-galactosyl-(1-&gt;4)-N-acetyl-beta-D-glucosaminyl derivative + UDP + H(+). The enzyme catalyses N-acetyl-D-glucosamine + UDP-alpha-D-galactose = beta-D-galactosyl-(1-&gt;4)-N-acetyl-D-glucosamine + UDP + H(+). It catalyses the reaction a beta-D-GlcNAc-(1-&gt;3)-beta-D-Gal-(1-&gt;4)-beta-D-Glc-(1&lt;-&gt;1)-Cer(d18:1(4E)) + UDP-alpha-D-galactose = a neolactoside nLc4Cer(d18:1(4E)) + UDP + H(+). It carries out the reaction a beta-D-glucosylceramide + UDP-alpha-D-galactose = a beta-D-galactosyl-(1-&gt;4)-beta-D-glucosyl-(1&lt;-&gt;1)-ceramide + UDP + H(+). The catalysed reaction is a neolactoside IV(3)-beta-GlcNAc-nLc4Cer + UDP-alpha-D-galactose = a neolactoside nLc6Cer + UDP + H(+). Its pathway is protein modification; protein glycosylation. In terms of biological role, responsible for the synthesis of complex-type N-linked oligosaccharides in many glycoproteins as well as the carbohydrate moieties of glycolipids. In Cricetulus griseus (Chinese hamster), this protein is Beta-1,4-galactosyltransferase 3 (B4GALT3).